The primary structure comprises 150 residues: Large ribosomal subunit protein bL9 (150 aa).

Belongs to the bacterial ribosomal protein bL9 family.

Its function is as follows. Binds to the 23S rRNA. The sequence is that of Large ribosomal subunit protein bL9 from Wigglesworthia glossinidia brevipalpis.